The chain runs to 491 residues: Synaptotagmin-9 (491 aa).

The Vesicular portion of the chain corresponds to 1-52 (MPGARDALCHQALQLLAELCARGALEHDSCQDFIYHLRDRARPRLRDPDISV). A cysteine motif region spans residues 9–31 (CHQALQLLAELCARGALEHDSCQ). Residues 53–73 (SLLTLVVTACGLALFGVSLFV) traverse the membrane as a helical segment. The Cytoplasmic portion of the chain corresponds to 74-491 (SWKLCWVPWR…AHWHSLMEKR (418 aa)). Residues 91 to 104 (SKDNNQEPLNYTDT) show a composition bias toward polar residues. A disordered region spans residues 91 to 147 (SKDNNQEPLNYTDTETNEQENSEDFLDPPTPCPDSSMKISHTSPDIPLSTQPGGQEN). Residues 105–116 (ETNEQENSEDFL) are compositionally biased toward acidic residues. Residues 127–144 (MKISHTSPDIPLSTQPGG) are compositionally biased toward polar residues. S177 carries the phosphoserine modification. 2 C2 domains span residues 220–341 (ACGK…ILWK) and 352–485 (DLGE…AHWH). 11 residues coordinate Ca(2+): D251, D257, D309, F310, D311, S314, D317, D383, D389, D443, and D445.

Belongs to the synaptotagmin family. In terms of assembly, homodimer; disulfide-linked via the cysteine motif. Can also form heterodimers with SYT3, SYT6, SYT7 and SYT10. Interacts with DNAJC5 and SNAP25, but not with HSC70. The interaction with DNAJC5 is stimulated tenfold in presence of calcium while the interaction with SNAP25 is inhibited. The cofactor is Ca(2+).

The protein resides in the cytoplasmic vesicle. Its subcellular location is the secretory vesicle. It localises to the synaptic vesicle membrane. Functionally, may be involved in Ca(2+)-dependent exocytosis of secretory vesicles through Ca(2+) and phospholipid binding to the C2 domain or may serve as Ca(2+) sensors in the process of vesicular trafficking and exocytosis. The polypeptide is Synaptotagmin-9 (Syt9) (Mus musculus (Mouse)).